The sequence spans 448 residues: GTPase Der (448 aa).

2 consecutive EngA-type G domains span residues 2-171 (FTVV…PDTQ) and 181-364 (PKIA…EEYS). GTP-binding positions include 8–15 (GRPNVGKS), 58–62 (DTGGF), 123–126 (NKID), 187–194 (GRPNVGKS), 234–238 (DTAGI), and 305–308 (NKWD). Residues 365 to 448 (KRVSTSELNR…PINIKIKQRK (84 aa)) enclose the KH-like domain.

This sequence belongs to the TRAFAC class TrmE-Era-EngA-EngB-Septin-like GTPase superfamily. EngA (Der) GTPase family. Associates with the 50S ribosomal subunit.

Its function is as follows. GTPase that plays an essential role in the late steps of ribosome biogenesis. In Thermodesulfovibrio yellowstonii (strain ATCC 51303 / DSM 11347 / YP87), this protein is GTPase Der.